We begin with the raw amino-acid sequence, 141 residues long: Large ribosomal subunit protein uL11 (141 aa).

Belongs to the universal ribosomal protein uL11 family. Part of the ribosomal stalk of the 50S ribosomal subunit. Interacts with L10 and the large rRNA to form the base of the stalk. L10 forms an elongated spine to which L12 dimers bind in a sequential fashion forming a multimeric L10(L12)X complex. One or more lysine residues are methylated.

In terms of biological role, forms part of the ribosomal stalk which helps the ribosome interact with GTP-bound translation factors. This is Large ribosomal subunit protein uL11 from Geobacillus kaustophilus (strain HTA426).